The following is a 256-amino-acid chain: Hydroxyethylthiazole kinase (256 aa).

Met37 is a binding site for substrate. 2 residues coordinate ATP: Lys113 and Thr159. Gly186 lines the substrate pocket.

The protein belongs to the Thz kinase family. Requires Mg(2+) as cofactor.

The catalysed reaction is 5-(2-hydroxyethyl)-4-methylthiazole + ATP = 4-methyl-5-(2-phosphooxyethyl)-thiazole + ADP + H(+). The protein operates within cofactor biosynthesis; thiamine diphosphate biosynthesis; 4-methyl-5-(2-phosphoethyl)-thiazole from 5-(2-hydroxyethyl)-4-methylthiazole: step 1/1. Its function is as follows. Catalyzes the phosphorylation of the hydroxyl group of 4-methyl-5-beta-hydroxyethylthiazole (THZ). The sequence is that of Hydroxyethylthiazole kinase from Exiguobacterium sibiricum (strain DSM 17290 / CCUG 55495 / CIP 109462 / JCM 13490 / 255-15).